The primary structure comprises 97 residues: Co-chaperonin GroES (97 aa).

The protein belongs to the GroES chaperonin family. As to quaternary structure, heptamer of 7 subunits arranged in a ring. Interacts with the chaperonin GroEL.

It localises to the cytoplasm. Functionally, together with the chaperonin GroEL, plays an essential role in assisting protein folding. The GroEL-GroES system forms a nano-cage that allows encapsulation of the non-native substrate proteins and provides a physical environment optimized to promote and accelerate protein folding. GroES binds to the apical surface of the GroEL ring, thereby capping the opening of the GroEL channel. This Aeromonas salmonicida protein is Co-chaperonin GroES.